Here is an 81-residue protein sequence, read N- to C-terminus: Large ribosomal subunit protein bL31B (81 aa).

The protein belongs to the bacterial ribosomal protein bL31 family. Type B subfamily. Part of the 50S ribosomal subunit.

The protein is Large ribosomal subunit protein bL31B (rpmE2) of Lactiplantibacillus plantarum (strain ATCC BAA-793 / NCIMB 8826 / WCFS1) (Lactobacillus plantarum).